We begin with the raw amino-acid sequence, 337 residues long: Biotin synthase (337 aa).

Positions 58–283 (PEVEVEGIIS…RTILRFAGGR (226 aa)) constitute a Radical SAM core domain. Residues Cys-73, Cys-77, and Cys-80 each coordinate [4Fe-4S] cluster. 4 residues coordinate [2Fe-2S] cluster: Cys-116, Cys-149, Cys-208, and Arg-278.

This sequence belongs to the radical SAM superfamily. Biotin synthase family. In terms of assembly, homodimer. [4Fe-4S] cluster serves as cofactor. [2Fe-2S] cluster is required as a cofactor.

It carries out the reaction (4R,5S)-dethiobiotin + (sulfur carrier)-SH + 2 reduced [2Fe-2S]-[ferredoxin] + 2 S-adenosyl-L-methionine = (sulfur carrier)-H + biotin + 2 5'-deoxyadenosine + 2 L-methionine + 2 oxidized [2Fe-2S]-[ferredoxin]. It functions in the pathway cofactor biosynthesis; biotin biosynthesis; biotin from 7,8-diaminononanoate: step 2/2. Functionally, catalyzes the conversion of dethiobiotin (DTB) to biotin by the insertion of a sulfur atom into dethiobiotin via a radical-based mechanism. In Rhodococcus jostii (strain RHA1), this protein is Biotin synthase.